A 375-amino-acid polypeptide reads, in one-letter code: Queuine tRNA-ribosyltransferase (375 aa).

D94 acts as the Proton acceptor in catalysis. Substrate-binding positions include 94 to 98 (DSGGF), D148, Q191, and G218. The RNA binding stretch occupies residues 249 to 255 (GVGTPED). Catalysis depends on D268, which acts as the Nucleophile. Residues 273–277 (TRIAR) form an RNA binding; important for wobble base 34 recognition region. Positions 306, 308, 311, and 337 each coordinate Zn(2+).

It belongs to the queuine tRNA-ribosyltransferase family. In terms of assembly, homodimer. Within each dimer, one monomer is responsible for RNA recognition and catalysis, while the other monomer binds to the replacement base PreQ1. It depends on Zn(2+) as a cofactor.

The catalysed reaction is 7-aminomethyl-7-carbaguanine + guanosine(34) in tRNA = 7-aminomethyl-7-carbaguanosine(34) in tRNA + guanine. The protein operates within tRNA modification; tRNA-queuosine biosynthesis. In terms of biological role, catalyzes the base-exchange of a guanine (G) residue with the queuine precursor 7-aminomethyl-7-deazaguanine (PreQ1) at position 34 (anticodon wobble position) in tRNAs with GU(N) anticodons (tRNA-Asp, -Asn, -His and -Tyr). Catalysis occurs through a double-displacement mechanism. The nucleophile active site attacks the C1' of nucleotide 34 to detach the guanine base from the RNA, forming a covalent enzyme-RNA intermediate. The proton acceptor active site deprotonates the incoming PreQ1, allowing a nucleophilic attack on the C1' of the ribose to form the product. After dissociation, two additional enzymatic reactions on the tRNA convert PreQ1 to queuine (Q), resulting in the hypermodified nucleoside queuosine (7-(((4,5-cis-dihydroxy-2-cyclopenten-1-yl)amino)methyl)-7-deazaguanosine). The chain is Queuine tRNA-ribosyltransferase from Caldanaerobacter subterraneus subsp. tengcongensis (strain DSM 15242 / JCM 11007 / NBRC 100824 / MB4) (Thermoanaerobacter tengcongensis).